Here is a 540-residue protein sequence, read N- to C-terminus: Chaperonin GroEL (540 aa).

Residues 29–32, 86–90, Gly-413, 476–478, and Asp-492 contribute to the ATP site; these read TLGP, DGTTT, and NAA.

The protein belongs to the chaperonin (HSP60) family. Forms a cylinder of 14 subunits composed of two heptameric rings stacked back-to-back. Interacts with the co-chaperonin GroES.

It localises to the cytoplasm. It carries out the reaction ATP + H2O + a folded polypeptide = ADP + phosphate + an unfolded polypeptide.. Together with its co-chaperonin GroES, plays an essential role in assisting protein folding. The GroEL-GroES system forms a nano-cage that allows encapsulation of the non-native substrate proteins and provides a physical environment optimized to promote and accelerate protein folding. This is Chaperonin GroEL from Streptococcus gordonii.